A 308-amino-acid polypeptide reads, in one-letter code: Tetraacyldisaccharide 4'-kinase (308 aa).

63–70 contributes to the ATP binding site; that stretch reads SFGGNGKT.

Belongs to the LpxK family.

It catalyses the reaction a lipid A disaccharide + ATP = a lipid IVA + ADP + H(+). The protein operates within glycolipid biosynthesis; lipid IV(A) biosynthesis; lipid IV(A) from (3R)-3-hydroxytetradecanoyl-[acyl-carrier-protein] and UDP-N-acetyl-alpha-D-glucosamine: step 6/6. Transfers the gamma-phosphate of ATP to the 4'-position of a tetraacyldisaccharide 1-phosphate intermediate (termed DS-1-P) to form tetraacyldisaccharide 1,4'-bis-phosphate (lipid IVA). This chain is Tetraacyldisaccharide 4'-kinase, found in Campylobacter jejuni (strain RM1221).